Here is a 114-residue protein sequence, read N- to C-terminus: Large ribosomal subunit protein bL21 (114 aa).

The protein belongs to the bacterial ribosomal protein bL21 family. In terms of assembly, part of the 50S ribosomal subunit. Contacts protein L20.

Functionally, this protein binds to 23S rRNA in the presence of protein L20. This chain is Large ribosomal subunit protein bL21, found in Protochlamydia amoebophila (strain UWE25).